Here is a 167-residue protein sequence, read N- to C-terminus: Large ribosomal subunit protein bL9 (167 aa).

Belongs to the bacterial ribosomal protein bL9 family.

Its function is as follows. Binds to the 23S rRNA. The protein is Large ribosomal subunit protein bL9 of Nitratidesulfovibrio vulgaris (strain DSM 19637 / Miyazaki F) (Desulfovibrio vulgaris).